The following is a 159-amino-acid chain: MNISIVAIGKLKEKYLKQGIDEYIKRLSAYAKVDIIELPDEKAPENLSDQDMKIVKDKEGERILSKISPDAHVIALAIEGKMKSSEELADNMDRLATYGKSKATFVIGGSLGLSDAVLKRADEKLSFSRMTFPHQLMRLILLEQVYRAFRINRGEPYHK.

Residues leucine 76, glycine 108, and 127–132 (FSRMTF) each bind S-adenosyl-L-methionine.

Belongs to the RNA methyltransferase RlmH family. In terms of assembly, homodimer.

The protein localises to the cytoplasm. The enzyme catalyses pseudouridine(1915) in 23S rRNA + S-adenosyl-L-methionine = N(3)-methylpseudouridine(1915) in 23S rRNA + S-adenosyl-L-homocysteine + H(+). Functionally, specifically methylates the pseudouridine at position 1915 (m3Psi1915) in 23S rRNA. The protein is Ribosomal RNA large subunit methyltransferase H of Bacillus licheniformis (strain ATCC 14580 / DSM 13 / JCM 2505 / CCUG 7422 / NBRC 12200 / NCIMB 9375 / NCTC 10341 / NRRL NRS-1264 / Gibson 46).